The following is a 523-amino-acid chain: NAD(P) transhydrogenase subunit alpha (523 aa).

At 1–411 (MKIGAPREIF…AEIATFRKQT (411 aa)) the chain is on the cytoplasmic side. NAD(+) is bound by residues 127–130 (QKMD), Val-177, 197–199 (DVR), and Gly-229. The next 2 membrane-spanning stretches (helical) occupy residues 412-432 (VSQV…GMYA) and 433-455 (PPSF…QVIW). The Cytoplasmic segment spans residues 456–464 (NVSHSLHTP). A helical transmembrane segment spans residues 465-485 (LMAVTNAISGIVILGALLQIG). The Periplasmic segment spans residues 486-489 (SGNV). A helical transmembrane segment spans residues 490–510 (LVVLLAAISVLIATINIVGGF). At 511-523 (LVTRRMLAMFQKS) the chain is on the cytoplasmic side.

Belongs to the AlaDH/PNT family. Heterodimer of an alpha (PntA) and a beta (PntB) chain.

The protein resides in the cell inner membrane. The catalysed reaction is NAD(+) + NADPH + H(+)(in) = NADH + NADP(+) + H(+)(out). The transhydrogenation between NADH and NADP is coupled to respiration and ATP hydrolysis and functions as a proton pump across the membrane. The protein is NAD(P) transhydrogenase subunit alpha of Cereibacter sphaeroides (Rhodobacter sphaeroides).